A 215-amino-acid polypeptide reads, in one-letter code: Protein GET1 (215 aa).

Over 1 to 4 the chain is Lumenal; sequence MINL. A helical transmembrane segment spans residues 5 to 24; the sequence is ALVIFLCTLLNQIVSWVGKS. Topologically, residues 25–108 are cytoplasmic; sequence VLQEIAFTAY…SFSKKFSTLL (84 aa). Positions 73–94 form a coiled coil; that stretch reads AKLRRKLDKGLADLEKTNNTLS. Residues 109–129 form a helical membrane-spanning segment; it reads WLMTTGAQFLLSWWFRKQPIF. At 130–153 the chain is on the lumenal side; that stretch reads WLPEGWVPYPVAWLLSFPSAPIGS. Residues 154 to 170 traverse the membrane as a helical segment; that stretch reads VSSGAWGAICRRVLSTL. At 171 to 215 the chain is on the cytoplasmic side; the sequence is QEIIQSLLAPSPAATGPVPTGPSSAKNDQPEAKIEALALEHEKLD. The interval 182-202 is disordered; that stretch reads PAATGPVPTGPSSAKNDQPEA.

Belongs to the WRB/GET1 family. In terms of assembly, interacts with GET3.

Its subcellular location is the endoplasmic reticulum membrane. Its function is as follows. Required for the post-translational delivery of tail-anchored (TA) proteins to the endoplasmic reticulum. Acts as a membrane receptor for soluble GET3, which recognizes and selectively binds the transmembrane domain of TA proteins in the cytosol. This Cryptococcus neoformans var. neoformans serotype D (strain JEC21 / ATCC MYA-565) (Filobasidiella neoformans) protein is Protein GET1.